Reading from the N-terminus, the 212-residue chain is Kynurenine formamidase (212 aa).

Residue tryptophan 18 participates in substrate binding. The Zn(2+) site is built by histidine 48, histidine 52, and aspartate 54. The active-site Proton donor/acceptor is the histidine 58. Zn(2+) is bound by residues histidine 160 and glutamate 172.

This sequence belongs to the Cyclase 1 superfamily. KynB family. In terms of assembly, homodimer. It depends on Zn(2+) as a cofactor.

It carries out the reaction N-formyl-L-kynurenine + H2O = L-kynurenine + formate + H(+). Its pathway is amino-acid degradation; L-tryptophan degradation via kynurenine pathway; L-kynurenine from L-tryptophan: step 2/2. Functionally, catalyzes the hydrolysis of N-formyl-L-kynurenine to L-kynurenine, the second step in the kynurenine pathway of tryptophan degradation. The polypeptide is Kynurenine formamidase (Paraburkholderia xenovorans (strain LB400)).